The sequence spans 160 residues: Large ribosomal subunit protein bL9 (160 aa).

It belongs to the bacterial ribosomal protein bL9 family.

In terms of biological role, binds to the 23S rRNA. The sequence is that of Large ribosomal subunit protein bL9 from Neorickettsia sennetsu (strain ATCC VR-367 / Miyayama) (Ehrlichia sennetsu).